The primary structure comprises 211 residues: Probable GTP-binding protein EngB (211 aa).

The EngB-type G domain maps to 30–204 (EGFEVAFAGR…YTVLADWMEL (175 aa)). GTP-binding positions include 38–45 (GRSNAGKS), 64–68 (GRTQL), 82–85 (DLPG), 149–152 (TKAD), and 182–185 (LFSA). Mg(2+)-binding residues include serine 45 and threonine 66.

Belongs to the TRAFAC class TrmE-Era-EngA-EngB-Septin-like GTPase superfamily. EngB GTPase family. It depends on Mg(2+) as a cofactor.

Its function is as follows. Necessary for normal cell division and for the maintenance of normal septation. The protein is Probable GTP-binding protein EngB of Pseudomonas savastanoi pv. phaseolicola (strain 1448A / Race 6) (Pseudomonas syringae pv. phaseolicola (strain 1448A / Race 6)).